The chain runs to 499 residues: Thioredoxin reductase 1, cytoplasmic (499 aa).

FAD-binding positions include 18-23 (IGGGSG), 42-43 (DF), 58-59 (TC), and 63-67 (GCIPK). A disulfide bridge connects residues Cys59 and Cys64. Position 68 is an N6-succinyllysine (Lys68). Tyr131 carries the post-translational modification Phosphotyrosine. Residues 131–132 (YG) and Thr161 contribute to the FAD site. NADP(+) contacts are provided by residues Arg166, 198 to 204 (ASYVALE), 221 to 222 (RS), Arg226, 226 to 228 (RGF), 291 to 293 (VGR), and Lys315. Tyr200 lines the FAD pocket. Residues Asp334, 341-343 (ELT), and His472 contribute to the FAD site. Glu341 is a binding site for NADP(+). The Proton acceptor role is filled by His472. A cross-link (cysteinyl-selenocysteine (Cys-Sec)) is located at residues 497 to 498 (CU). A non-standard amino acid (selenocysteine) is located at residue Sec498.

Belongs to the class-I pyridine nucleotide-disulfide oxidoreductase family. Homodimer. FAD is required as a cofactor. In terms of processing, ISGylated.

It is found in the cytoplasm. The catalysed reaction is [thioredoxin]-dithiol + NADP(+) = [thioredoxin]-disulfide + NADPH + H(+). It catalyses the reaction H2O2 + NADPH + H(+) = NADP(+) + 2 H2O. In terms of biological role, reduces disulfideprotein thioredoxin (Trx) to its dithiol-containing form. Homodimeric flavoprotein involved in the regulation of cellular redox reactions, growth and differentiation. Contains a selenocysteine residue at the C-terminal active site that is essential for catalysis. Also has reductase activity on hydrogen peroxide (H2O2). This Rattus norvegicus (Rat) protein is Thioredoxin reductase 1, cytoplasmic.